We begin with the raw amino-acid sequence, 250 residues long: DNA polymerase sliding clamp (250 aa).

The protein belongs to the PCNA family. Homotrimer. The subunits circularize to form a toroid; DNA passes through its center. Replication factor C (RFC) is required to load the toroid on the DNA.

Sliding clamp subunit that acts as a moving platform for DNA processing. Responsible for tethering the catalytic subunit of DNA polymerase and other proteins to DNA during high-speed replication. The sequence is that of DNA polymerase sliding clamp from Methanococcus maripaludis (strain C6 / ATCC BAA-1332).